The primary structure comprises 122 residues: Large ribosomal subunit protein uL14 (122 aa).

It belongs to the universal ribosomal protein uL14 family. In terms of assembly, part of the 50S ribosomal subunit. Forms a cluster with proteins L3 and L19. In the 70S ribosome, L14 and L19 interact and together make contacts with the 16S rRNA in bridges B5 and B8. Interacts with ribosomal silencing factor RsfS, which may inhibit ribosomal subunit association.

In terms of biological role, binds to 23S rRNA. Forms part of two intersubunit bridges in the 70S ribosome. The sequence is that of Large ribosomal subunit protein uL14 from Treponema pallidum (strain Nichols).